Consider the following 355-residue polypeptide: Squamosa promoter-binding protein-like 15 (355 aa).

The interval 1-27 (MELLKGSGLNQTESGGSSSTESSSLSG) is disordered. Positions 12 to 27 (TESGGSSSTESSSLSG) are enriched in low complexity. The SBP-type zinc-finger motif lies at 61-138 (TARCQVEGCR…ACHNERRRKP (78 aa)). Residues Cys64, Cys69, Cys86, His89, Cys105, Cys108, His112, and Cys124 each coordinate Zn(2+). Residues 121–137 (KRSCRRRLACHNERRRK) carry the Bipartite nuclear localization signal motif.

The protein localises to the nucleus. Functionally, probable transcription factor required for the flowering response to vernalization in the shoot apical meristem (SAM). Defines the competence of shoot meristems to flower in response to vernalization in perennials. The polypeptide is Squamosa promoter-binding protein-like 15 (Arabis alpina (Alpine rock-cress)).